A 776-amino-acid polypeptide reads, in one-letter code: 5-methyltetrahydropteroyltriglutamate--homocysteine methyltransferase (776 aa).

5-methyltetrahydropteroyltri-L-glutamate is bound by residues 16-19 (RELK) and Lys-112. Residues 432 to 434 (IGS) and Glu-485 contribute to the L-homocysteine site. L-methionine contacts are provided by residues 432-434 (IGS) and Glu-485. 5-methyltetrahydropteroyltri-L-glutamate-binding positions include 516 to 517 (RC) and Trp-562. L-homocysteine is bound at residue Asp-600. Asp-600 is an L-methionine binding site. Residue Glu-606 participates in 5-methyltetrahydropteroyltri-L-glutamate binding. Zn(2+)-binding residues include His-642, Cys-644, and Glu-666. The Proton donor role is filled by His-695. A Zn(2+)-binding site is contributed by Cys-727. The tract at residues 755–776 (HAGAVHAGTPATRAEHAESALA) is disordered. A compositionally biased stretch (basic and acidic residues) spans 767-776 (RAEHAESALA).

The protein belongs to the vitamin-B12 independent methionine synthase family. Zn(2+) serves as cofactor.

The enzyme catalyses 5-methyltetrahydropteroyltri-L-glutamate + L-homocysteine = tetrahydropteroyltri-L-glutamate + L-methionine. It functions in the pathway amino-acid biosynthesis; L-methionine biosynthesis via de novo pathway; L-methionine from L-homocysteine (MetE route): step 1/1. Its function is as follows. Catalyzes the transfer of a methyl group from 5-methyltetrahydrofolate to homocysteine resulting in methionine formation. In Ralstonia nicotianae (strain ATCC BAA-1114 / GMI1000) (Ralstonia solanacearum), this protein is 5-methyltetrahydropteroyltriglutamate--homocysteine methyltransferase.